A 429-amino-acid chain; its full sequence is MNYEVKKLEKSAVEVKLHLTAEEVKPIVDKVLAHVGEHAEVAGFRKGHAPKEVLMTNYKDHIESDVANDAINANFPEIVDKEKLEPVSYVRLKEINLKDDLNLTFDIDVYPQFELGNYKGLEAEKKSFEMTDDLLKEELEIMVRNHAKLEEVEDAGYKAQLDDTVDLAFEGFMDGAPFPGGKAESHLLKLGSKSFIDNFEEQLVGYTKGQEGEITVKFPAEYHAAELAGKPAQFKVKINAIKKLRQPELNDDFAKELGYASLDELKAKTKEETTKRENDRIENEYVSALLDKLMETTTIDVPVSMVQAEIQNRLKELEYQLSMQGFKMDDYLKMMGGNVETFAAQLAPAAEKKVKIDLILDRIAKDNNFEATDEELNQRMEEIAKMYGMDVPALEEELKKNKNLENFKASVKYDIVMKKAIDEVVKNAK.

The PPIase FKBP-type domain occupies 162–247 (DDTVDLAFEG…INAIKKLRQP (86 aa)).

Belongs to the FKBP-type PPIase family. Tig subfamily.

It localises to the cytoplasm. It catalyses the reaction [protein]-peptidylproline (omega=180) = [protein]-peptidylproline (omega=0). In terms of biological role, involved in protein export. Acts as a chaperone by maintaining the newly synthesized protein in an open conformation. Functions as a peptidyl-prolyl cis-trans isomerase. In Fusobacterium nucleatum subsp. nucleatum (strain ATCC 25586 / DSM 15643 / BCRC 10681 / CIP 101130 / JCM 8532 / KCTC 2640 / LMG 13131 / VPI 4355), this protein is Trigger factor.